We begin with the raw amino-acid sequence, 273 residues long: R-spondin-3 (273 aa).

Positions M1 to S21 are cleaved as a signal peptide. 2 FU repeats span residues P35–G86 and I92–A135. N-linked (GlcNAc...) asparagine glycosylation occurs at N36. 11 disulfides stabilise this stretch: C41–C48, C45–C54, C57–C76, C80–C95, C98–C105, C102–C111, C114–C125, C129–C142, C148–C190, C159–C166, and C199–C206. Positions H147–P207 constitute a TSP type-1 domain. Positions V201–H273 are disordered. A compositionally biased stretch (basic residues) spans R213–P223. Over residues N224–Q252 the composition is skewed to basic and acidic residues.

Belongs to the R-spondin family. In terms of assembly, interacts with the extracellular domain of FZD8 and LRP6. It however does not form a ternary complex with FZD8 and LRP6. Interacts with WNT1. Binds heparin. Interacts with LGR4, LGR5 and LGR6.

It is found in the secreted. Functionally, activator of the canonical Wnt signaling pathway by acting as a ligand for LGR4-6 receptors, which acts as a key regulator of angiogenesis. Upon binding to LGR4-6 (LGR4, LGR5 or LGR6), LGR4-6 associate with phosphorylated LRP6 and frizzled receptors that are activated by extracellular Wnt receptors, triggering the canonical Wnt signaling pathway to increase expression of target genes. Also regulates the canonical Wnt/beta-catenin-dependent pathway and non-canonical Wnt signaling by acting as an inhibitor of ZNRF3, an important regulator of the Wnt signaling pathway. Acts as a ligand for frizzled FZD8 and LRP6. May negatively regulate the TGF-beta pathway. Acts as a key regulator of angiogenesis by controlling vascular stability and pruning: acts by activating the non-canonical Wnt signaling pathway in endothelial cells. Can also amplify Wnt signaling pathway independently of LGR4-6 receptors, possibly by acting as a direct antagonistic ligand to RNF43 and ZNRF3. The chain is R-spondin-3 (RSPO3) from Bos taurus (Bovine).